A 273-amino-acid chain; its full sequence is SPRY domain-containing SOCS box protein 1 (273 aa).

Phosphotyrosine; by MET is present on tyrosine 31. The B30.2/SPRY domain maps to 33–231; sequence KPTRLDLLLD…IRMRYLNGLD (199 aa). One can recognise an SOCS box domain in the interval 232–273; sequence PEPLPLMDLCRRSVRLALGRERLGEIHTLPLPASLKAYLLYQ.

The protein belongs to the SPSB family. As to quaternary structure, component of the probable ECS(SPSB1) E3 ubiquitin-protein ligase complex which contains CUL5, RNF7/RBX2, Elongin BC complex and SPSB1. Interacts with CUL5, RNF7, ELOB and ELOC. Directly interacts with MET tyrosine kinase domain in the presence and in the absence of HGF, however HGF treatment has a positive effect on this interaction. When phosphorylated, interacts with RASA1 without affecting its stability. Interacts (via B30.2/SPRY domain) with PAWR; this interaction is direct and occurs in association with the Elongin BC complex. Interacts with NOS2. Interacts with EPHB2.

It localises to the cytoplasm. The protein localises to the cytosol. Its pathway is protein modification; protein ubiquitination. In terms of biological role, substrate recognition component of a SCF-like ECS (Elongin BC-CUL2/5-SOCS-box protein) E3 ubiquitin-protein ligase complex which mediates the ubiquitination and subsequent proteasomal degradation of target proteins. Negatively regulates nitric oxide (NO) production and limits cellular toxicity in activated macrophages by mediating the ubiquitination and proteasomal degradation of NOS2. Acts as a bridge which links NOS2 with the ECS E3 ubiquitin ligase complex components ELOC and CUL5. The polypeptide is SPRY domain-containing SOCS box protein 1 (SPSB1) (Homo sapiens (Human)).